The following is a 257-amino-acid chain: NAD kinase (257 aa).

Residue D46 is the Proton acceptor of the active site. Residues D46–G47, H51, N116–E117, D146, A154, T157–S162, and Q218 contribute to the NAD(+) site.

This sequence belongs to the NAD kinase family. A divalent metal cation is required as a cofactor.

It is found in the cytoplasm. The catalysed reaction is NAD(+) + ATP = ADP + NADP(+) + H(+). Involved in the regulation of the intracellular balance of NAD and NADP, and is a key enzyme in the biosynthesis of NADP. Catalyzes specifically the phosphorylation on 2'-hydroxyl of the adenosine moiety of NAD to yield NADP. The protein is NAD kinase of Rhizobium meliloti (strain 1021) (Ensifer meliloti).